We begin with the raw amino-acid sequence, 550 residues long: CTP synthase (550 aa).

Positions 1 to 277 (MNGSADAGPR…GRAVERALGL (277 aa)) are amidoligase domain. CTP is bound at residue S23. S23 provides a ligand contact to UTP. Residue 24–29 (SLGKGI) participates in ATP binding. Y64 serves as a coordination point for L-glutamine. D81 provides a ligand contact to ATP. Residues D81 and E151 each contribute to the Mg(2+) site. CTP contacts are provided by residues 158-160 (DIE), 198-203 (KTKPTQ), and K234. UTP-binding positions include 198–203 (KTKPTQ) and K234. The 248-residue stretch at 302 to 549 (KIAIAGKYVK…VEAALAYQER (248 aa)) folds into the Glutamine amidotransferase type-1 domain. An L-glutamine-binding site is contributed by G364. C391 functions as the Nucleophile; for glutamine hydrolysis in the catalytic mechanism. L-glutamine is bound by residues 392-395 (LGLQ), E415, and R472. Active-site residues include H522 and E524.

This sequence belongs to the CTP synthase family. Homotetramer.

It catalyses the reaction UTP + L-glutamine + ATP + H2O = CTP + L-glutamate + ADP + phosphate + 2 H(+). The catalysed reaction is L-glutamine + H2O = L-glutamate + NH4(+). It carries out the reaction UTP + NH4(+) + ATP = CTP + ADP + phosphate + 2 H(+). Its pathway is pyrimidine metabolism; CTP biosynthesis via de novo pathway; CTP from UDP: step 2/2. Its activity is regulated as follows. Allosterically activated by GTP, when glutamine is the substrate; GTP has no effect on the reaction when ammonia is the substrate. The allosteric effector GTP functions by stabilizing the protein conformation that binds the tetrahedral intermediate(s) formed during glutamine hydrolysis. Inhibited by the product CTP, via allosteric rather than competitive inhibition. In terms of biological role, catalyzes the ATP-dependent amination of UTP to CTP with either L-glutamine or ammonia as the source of nitrogen. Regulates intracellular CTP levels through interactions with the four ribonucleotide triphosphates. This is CTP synthase from Thermus thermophilus (strain ATCC BAA-163 / DSM 7039 / HB27).